Consider the following 504-residue polypeptide: Ribonuclease Y (504 aa).

A helical membrane pass occupies residues 2–22 (TTSIVIGVVLVTVGLTFGWTI). Residues 194–279 (TVSTVNLPSE…EIVQKVTQEV (86 aa)) form the KH domain. An HD domain is found at 320–413 (VLYHSKEVAL…VQVADAISAA (94 aa)).

The protein belongs to the RNase Y family.

Its subcellular location is the cell membrane. Endoribonuclease that initiates mRNA decay. The polypeptide is Ribonuclease Y (Treponema pallidum (strain Nichols)).